Here is a 523-residue protein sequence, read N- to C-terminus: Lysine--tRNA ligase (523 aa).

A 'HIGH' region motif is present at residues 30-38; the sequence is PSGYVHVGN. Residues D95, C99, H100, H106, C177, H180, C199, and H203 each coordinate Zn(2+). Positions 279–283 match the 'KMSKS' region motif; sequence KMSGS.

This sequence belongs to the class-I aminoacyl-tRNA synthetase family. Zn(2+) is required as a cofactor.

It localises to the cytoplasm. It carries out the reaction tRNA(Lys) + L-lysine + ATP = L-lysyl-tRNA(Lys) + AMP + diphosphate. In Pyrococcus horikoshii (strain ATCC 700860 / DSM 12428 / JCM 9974 / NBRC 100139 / OT-3), this protein is Lysine--tRNA ligase (lysS).